The primary structure comprises 125 residues: Small ribosomal subunit protein uS13 (125 aa).

Residues 97–125 form a disordered region; that stretch reads PVRGQKTRSNARTRKGPRPSRIKTKKKSS. Residues 101–125 show a composition bias toward basic residues; sequence QKTRSNARTRKGPRPSRIKTKKKSS.

It belongs to the universal ribosomal protein uS13 family. As to quaternary structure, part of the 30S ribosomal subunit. Forms a loose heterodimer with protein S19. Forms two bridges to the 50S subunit in the 70S ribosome.

In terms of biological role, located at the top of the head of the 30S subunit, it contacts several helices of the 16S rRNA. In the 70S ribosome it contacts the 23S rRNA (bridge B1a) and protein L5 of the 50S subunit (bridge B1b), connecting the 2 subunits; these bridges are implicated in subunit movement. Contacts the tRNAs in the A and P-sites. This chain is Small ribosomal subunit protein uS13, found in Thermotoga maritima (strain ATCC 43589 / DSM 3109 / JCM 10099 / NBRC 100826 / MSB8).